A 499-amino-acid chain; its full sequence is Bifunctional purine biosynthesis protein PurH (499 aa).

The region spanning 1-144 (MIKRALISVF…KNFKDVVVLT (144 aa)) is the MGS-like domain.

The protein belongs to the PurH family.

It carries out the reaction (6R)-10-formyltetrahydrofolate + 5-amino-1-(5-phospho-beta-D-ribosyl)imidazole-4-carboxamide = 5-formamido-1-(5-phospho-D-ribosyl)imidazole-4-carboxamide + (6S)-5,6,7,8-tetrahydrofolate. It catalyses the reaction IMP + H2O = 5-formamido-1-(5-phospho-D-ribosyl)imidazole-4-carboxamide. It functions in the pathway purine metabolism; IMP biosynthesis via de novo pathway; 5-formamido-1-(5-phospho-D-ribosyl)imidazole-4-carboxamide from 5-amino-1-(5-phospho-D-ribosyl)imidazole-4-carboxamide (10-formyl THF route): step 1/1. Its pathway is purine metabolism; IMP biosynthesis via de novo pathway; IMP from 5-formamido-1-(5-phospho-D-ribosyl)imidazole-4-carboxamide: step 1/1. This Clostridium botulinum (strain Loch Maree / Type A3) protein is Bifunctional purine biosynthesis protein PurH.